Here is a 431-residue protein sequence, read N- to C-terminus: DNA polymerase delta subunit 2 (431 aa).

This sequence belongs to the DNA polymerase delta/II small subunit family. Component of both the DNA polymerase delta and DNA polymerase zeta complexes. The DNA polymerase delta complex consisting of three subunits: the catalytic subunit PolD1 and two accessory subunits PolD2/Pol31 and PolD3/Pol32. Within the delta complex, interacts with both PolD1 and PolD3, and is able to interact with PolD1 in the absence of PolD3. Component of the DNA polymerase zeta complex consisting of four subunits: the catalytic subunit PolZ1 and three accessory subunits PolZ2/Rev7, PolD2/Pol31 and PolD3/Pol32. In terms of tissue distribution, expressed in ovaries and embryos (at the protein level).

The protein localises to the nucleus. The protein resides in the nucleoplasm. Its function is as follows. Accessory component of both the DNA polymerase delta complex and possibly the DNA polymerase zeta complex. As a component of the delta complex, participates in high fidelity genome replication, including lagging strand synthesis, DNA recombination and repair. Appears to promote the function of the DNA pol-delta complex accessory subunit PolD3 in both embryonic and postembryonic somatic cells. The polypeptide is DNA polymerase delta subunit 2 (Drosophila melanogaster (Fruit fly)).